The sequence spans 50 residues: MIPTGEKIHLLIKGSSSANIPCELKSRSKLSPVTNGGKTIGKSNKVSKND.

A disordered region spans residues 28 to 50 (SKLSPVTNGGKTIGKSNKVSKND). Over residues 29–50 (KLSPVTNGGKTIGKSNKVSKND) the composition is skewed to polar residues.

This is an uncharacterized protein from Haemophilus influenzae (strain ATCC 51907 / DSM 11121 / KW20 / Rd).